A 495-amino-acid polypeptide reads, in one-letter code: Flagellin (495 aa).

The protein belongs to the bacterial flagellin family.

It is found in the secreted. Its subcellular location is the bacterial flagellum. Its function is as follows. Flagellin is the subunit protein which polymerizes to form the filaments of bacterial flagella. This is Flagellin (fliC) from Salmonella typhimurium (strain LT2 / SGSC1412 / ATCC 700720).